A 213-amino-acid polypeptide reads, in one-letter code: HTH-type transcriptional regulator SrpR (213 aa).

Positions 10 to 70 constitute an HTH tetR-type domain; sequence EETRQRIIDA…AVLASRQHPL (61 aa). Positions 33-52 form a DNA-binding region, H-T-H motif; the sequence is TLDQIARKAGVTRGAVYWHF.

Functionally, in conjunction with SrpS represses the srpABC operon. This Pseudomonas putida (Arthrobacter siderocapsulatus) protein is HTH-type transcriptional regulator SrpR (srpR).